A 251-amino-acid polypeptide reads, in one-letter code: Hydroxyacylglutathione hydrolase (251 aa).

Zn(2+) contacts are provided by His55, His57, Asp59, His60, His112, Asp131, and His169.

Belongs to the metallo-beta-lactamase superfamily. Glyoxalase II family. As to quaternary structure, monomer. Zn(2+) is required as a cofactor.

It catalyses the reaction an S-(2-hydroxyacyl)glutathione + H2O = a 2-hydroxy carboxylate + glutathione + H(+). It participates in secondary metabolite metabolism; methylglyoxal degradation; (R)-lactate from methylglyoxal: step 2/2. Thiolesterase that catalyzes the hydrolysis of S-D-lactoyl-glutathione to form glutathione and D-lactic acid. In Erythrobacter litoralis (strain HTCC2594), this protein is Hydroxyacylglutathione hydrolase.